A 280-amino-acid chain; its full sequence is Fructose-1,6-bisphosphatase/inositol-1-monophosphatase (280 aa).

Residues Glu-73, Asp-94, Leu-96, and Asp-97 each contribute to the Mg(2+) site. Residues 97–99 (DGT), Arg-195, Val-200, and Arg-219 contribute to the substrate site. Asp-226 lines the Mg(2+) pocket.

Belongs to the inositol monophosphatase superfamily. FBPase class 4 family. The cofactor is Mg(2+).

The catalysed reaction is beta-D-fructose 1,6-bisphosphate + H2O = beta-D-fructose 6-phosphate + phosphate. The enzyme catalyses a myo-inositol phosphate + H2O = myo-inositol + phosphate. Its function is as follows. Phosphatase with broad specificity; it can dephosphorylate fructose 1,6-bisphosphate, and both D and L isomers of inositol-1-phosphate (I-1-P). This is Fructose-1,6-bisphosphatase/inositol-1-monophosphatase (suhB) from Methanothermobacter thermautotrophicus (strain ATCC 29096 / DSM 1053 / JCM 10044 / NBRC 100330 / Delta H) (Methanobacterium thermoautotrophicum).